The chain runs to 119 residues: DNA-binding protein inhibitor ID-3 (119 aa).

The region spanning 28–80 (RGKSPAAEEPLSLLDDMNHCYSRLRELVPGVPRGTQLSQVEILQRVIDYILDL) is the bHLH domain.

In terms of assembly, homodimer, and heterodimer with other HLH proteins. Interacts with COPS5 and COPS7A. Interacts with IFI204. Interacts with GATA4 and NKX2-5. Interacts with ANKRD2; both proteins cooperate in myoblast differentiation. Interacts with CLOCK and BMAL1.

It is found in the nucleus. Functionally, transcriptional regulator (lacking a basic DNA binding domain) which negatively regulates the basic helix-loop-helix (bHLH) transcription factors by forming heterodimers and inhibiting their DNA binding and transcriptional activity. Implicated in regulating a variety of cellular processes, including cellular growth, senescence, differentiation, apoptosis, angiogenesis, and neoplastic transformation. Involved in myogenesis by inhibiting skeletal muscle and cardiac myocyte differentiation and promoting muscle precursor cells proliferation. Inhibits the binding of E2A-containing protein complexes to muscle creatine kinase E-box enhancer. Regulates the circadian clock by repressing the transcriptional activator activity of the CLOCK-BMAL1 heterodimer. This Bos taurus (Bovine) protein is DNA-binding protein inhibitor ID-3 (ID3).